The sequence spans 501 residues: Flagellin (501 aa).

Belongs to the bacterial flagellin family.

It is found in the secreted. It localises to the bacterial flagellum. Functionally, flagellin is the subunit protein which polymerizes to form the filaments of bacterial flagella. The chain is Flagellin (flaA) from Aquifex pyrophilus.